The chain runs to 59 residues: Small ribosomal subunit protein eS17 (59 aa).

Belongs to the eukaryotic ribosomal protein eS17 family.

This Halobacterium salinarum (strain ATCC 29341 / DSM 671 / R1) protein is Small ribosomal subunit protein eS17.